The primary structure comprises 435 residues: Glutamyl-tRNA reductase (435 aa).

Substrate-binding positions include 49-52 (TCNR), S118, 123-125 (EPQ), and Q129. C50 functions as the Nucleophile in the catalytic mechanism. An NADP(+)-binding site is contributed by 203–208 (GAGETI).

It belongs to the glutamyl-tRNA reductase family. Homodimer.

It carries out the reaction (S)-4-amino-5-oxopentanoate + tRNA(Glu) + NADP(+) = L-glutamyl-tRNA(Glu) + NADPH + H(+). It participates in porphyrin-containing compound metabolism; protoporphyrin-IX biosynthesis; 5-aminolevulinate from L-glutamyl-tRNA(Glu): step 1/2. In terms of biological role, catalyzes the NADPH-dependent reduction of glutamyl-tRNA(Glu) to glutamate 1-semialdehyde (GSA). This Glaesserella parasuis serovar 5 (strain SH0165) (Haemophilus parasuis) protein is Glutamyl-tRNA reductase.